The chain runs to 130 residues: Protein Wnt-9 (130 aa).

The O-palmitoleoyl serine; by PORCN moiety is linked to residue Ser1. The tract at residues 41-69 (AGERTIARSRRRPREQRGQRRPKVSDGAL) is disordered. Positions 47-62 (ARSRRRPREQRGQRRP) are enriched in basic residues. An N-linked (GlcNAc...) asparagine glycan is attached at Asn97. Residues Cys100 and Cys111 are joined by a disulfide bond.

This sequence belongs to the Wnt family. Post-translationally, palmitoleoylation is required for efficient binding to frizzled receptors. Depalmitoleoylation leads to Wnt signaling pathway inhibition.

The protein localises to the secreted. It localises to the extracellular space. It is found in the extracellular matrix. Functionally, ligand for members of the frizzled family of seven transmembrane receptors. Probable developmental protein. May be a signaling molecule which affects the development of discrete regions of tissues. Is likely to signal over only few cell diameters. The polypeptide is Protein Wnt-9 (WNT-9) (Eptatretus stoutii (Pacific hagfish)).